We begin with the raw amino-acid sequence, 142 residues long: MAKKSIGQLKLQVPAGAATPSPPIGPALGQRGINIMEFCKAFNAATQEMEKGAPIPVIITYYQDKSFTFSLKTPPVSFFLKKEANLKSGSKEPGKVSVGSISRDKIRSIAQAKMKDLNANDIEAAMRMVEGSARSMGLEVVG.

It belongs to the universal ribosomal protein uL11 family. In terms of assembly, part of the ribosomal stalk of the 50S ribosomal subunit. Interacts with L10 and the large rRNA to form the base of the stalk. L10 forms an elongated spine to which L12 dimers bind in a sequential fashion forming a multimeric L10(L12)X complex. Post-translationally, one or more lysine residues are methylated.

In terms of biological role, forms part of the ribosomal stalk which helps the ribosome interact with GTP-bound translation factors. The polypeptide is Large ribosomal subunit protein uL11 (Bartonella henselae (strain ATCC 49882 / DSM 28221 / CCUG 30454 / Houston 1) (Rochalimaea henselae)).